The following is a 952-amino-acid chain: Isoleucine--tRNA ligase (952 aa).

The 'HIGH' region signature appears at 58–68 (PYANGDIHIGH). L-isoleucyl-5'-AMP is bound at residue E576. The short motif at 617 to 621 (KMSKS) is the 'KMSKS' region element. ATP is bound at residue K620. C915, C918, C935, and C938 together coordinate Zn(2+).

Belongs to the class-I aminoacyl-tRNA synthetase family. IleS type 1 subfamily. Monomer. Requires Zn(2+) as cofactor.

It localises to the cytoplasm. It catalyses the reaction tRNA(Ile) + L-isoleucine + ATP = L-isoleucyl-tRNA(Ile) + AMP + diphosphate. Catalyzes the attachment of isoleucine to tRNA(Ile). As IleRS can inadvertently accommodate and process structurally similar amino acids such as valine, to avoid such errors it has two additional distinct tRNA(Ile)-dependent editing activities. One activity is designated as 'pretransfer' editing and involves the hydrolysis of activated Val-AMP. The other activity is designated 'posttransfer' editing and involves deacylation of mischarged Val-tRNA(Ile). In Vibrio atlanticus (strain LGP32) (Vibrio splendidus (strain Mel32)), this protein is Isoleucine--tRNA ligase.